The following is a 138-amino-acid chain: MLIPRKVAHRKQHHPKRTGAAKGGTRIAFGEYAIQSLESAYVTNRQIESARIAMTRHIRRGGKVWINIYPDRPLTKKPAETRMGSGKGSPEWWVANVKPGRIMFELSGVAEPVAREAMRRAIHKLPMKCRFVTREGGA.

A compositionally biased stretch (basic residues) spans 1–19; it reads MLIPRKVAHRKQHHPKRTG. The disordered stretch occupies residues 1 to 22; sequence MLIPRKVAHRKQHHPKRTGAAK.

It belongs to the universal ribosomal protein uL16 family. As to quaternary structure, part of the 50S ribosomal subunit.

Its function is as follows. Binds 23S rRNA and is also seen to make contacts with the A and possibly P site tRNAs. The protein is Large ribosomal subunit protein uL16 of Parafrankia sp. (strain EAN1pec).